The sequence spans 25 residues: M-lycotoxin-Hc1a (25 aa).

Residue Leu25 is modified to Leucine amide.

Belongs to the cationic peptide 04 (cupiennin) family. 05 subfamily. In terms of tissue distribution, expressed by the venom gland.

It is found in the secreted. The protein resides in the target cell membrane. In terms of biological role, forms pore that permeabilize the cell membrane. Promotes efflux of calcium from synaptosomes, causes hemolysis, and dissipates voltage gradients across muscle membrane. Potently inhibits the growth of bacteria, yeast and Leishmania. Is lethal to lepidopteran larvae. May function both in the prey capture strategy as well as protection from infectious organisms arising from prey ingestion. This is M-lycotoxin-Hc1a from Hogna carolinensis (Carolina wolf spider).